A 396-amino-acid polypeptide reads, in one-letter code: Ornithine aminotransferase 2 (396 aa).

An N6-(pyridoxal phosphate)lysine modification is found at lysine 255.

This sequence belongs to the class-III pyridoxal-phosphate-dependent aminotransferase family. OAT subfamily. The cofactor is pyridoxal 5'-phosphate.

It localises to the cytoplasm. The catalysed reaction is a 2-oxocarboxylate + L-ornithine = L-glutamate 5-semialdehyde + an L-alpha-amino acid. It functions in the pathway amino-acid biosynthesis; L-proline biosynthesis; L-glutamate 5-semialdehyde from L-ornithine: step 1/1. In terms of biological role, catalyzes the interconversion of ornithine to glutamate semialdehyde. The chain is Ornithine aminotransferase 2 from Staphylococcus aureus (strain MRSA252).